Here is a 226-residue protein sequence, read N- to C-terminus: Urease accessory protein UreF (226 aa).

Belongs to the UreF family. In terms of assembly, ureD, UreF and UreG form a complex that acts as a GTP-hydrolysis-dependent molecular chaperone, activating the urease apoprotein by helping to assemble the nickel containing metallocenter of UreC. The UreE protein probably delivers the nickel.

It localises to the cytoplasm. Its function is as follows. Required for maturation of urease via the functional incorporation of the urease nickel metallocenter. The protein is Urease accessory protein UreF of Burkholderia vietnamiensis (strain G4 / LMG 22486) (Burkholderia cepacia (strain R1808)).